The chain runs to 573 residues: Urease subunit alpha 2 (573 aa).

The 439-residue stretch at 135–573 folds into the Urease domain; sequence GGMDTHVHYI…ISLNQLYFFS (439 aa). Positions 140, 142, and 223 each coordinate Ni(2+). Lys-223 bears the N6-carboxylysine mark. His-225 serves as a coordination point for substrate. Residues His-252 and His-278 each contribute to the Ni(2+) site. The active-site Proton donor is His-326. Asp-366 is a binding site for Ni(2+).

It belongs to the metallo-dependent hydrolases superfamily. Urease alpha subunit family. As to quaternary structure, heterotrimer of UreA (gamma), UreB (beta) and UreC (alpha) subunits. Three heterotrimers associate to form the active enzyme. The cofactor is Ni cation. Carboxylation allows a single lysine to coordinate two nickel ions.

The protein localises to the cytoplasm. The enzyme catalyses urea + 2 H2O + H(+) = hydrogencarbonate + 2 NH4(+). Its pathway is nitrogen metabolism; urea degradation; CO(2) and NH(3) from urea (urease route): step 1/1. In terms of biological role, disrupting the ure2 operon has no effect on urease activity, or pathogen survival in BALB/c mice when inoculated by gavage, but confers slightly enhanced resistance to low pH killing in vitro. The chain is Urease subunit alpha 2 from Brucella suis biovar 1 (strain 1330).